The primary structure comprises 700 residues: Methionine--tRNA ligase (700 aa).

The short motif at 14–24 is the 'HIGH' region element; it reads PYANGPVHLGH. Residues cysteine 146, cysteine 149, cysteine 159, and cysteine 162 each coordinate Zn(2+). A 'KMSKS' region motif is present at residues 344-348; it reads KFSKS. Lysine 347 provides a ligand contact to ATP. Residues 599–700 enclose the tRNA-binding domain; it reads DFLKVDLRVA…GEEINGRQIQ (102 aa).

This sequence belongs to the class-I aminoacyl-tRNA synthetase family. MetG type 1 subfamily. Homodimer. The cofactor is Zn(2+).

Its subcellular location is the cytoplasm. It carries out the reaction tRNA(Met) + L-methionine + ATP = L-methionyl-tRNA(Met) + AMP + diphosphate. Is required not only for elongation of protein synthesis but also for the initiation of all mRNA translation through initiator tRNA(fMet) aminoacylation. The polypeptide is Methionine--tRNA ligase (Pelodictyon phaeoclathratiforme (strain DSM 5477 / BU-1)).